A 901-amino-acid chain; its full sequence is Protein translocase subunit SecA (901 aa).

ATP contacts are provided by residues glutamine 87, 105–109 (GEGKT), and aspartate 512. Positions 885, 887, 896, and 897 each coordinate Zn(2+).

Belongs to the SecA family. Monomer and homodimer. Part of the essential Sec protein translocation apparatus which comprises SecA, SecYEG and auxiliary proteins SecDF-YajC and YidC. Requires Zn(2+) as cofactor.

It localises to the cell inner membrane. The protein localises to the cytoplasm. It catalyses the reaction ATP + H2O + cellular proteinSide 1 = ADP + phosphate + cellular proteinSide 2.. Its function is as follows. Part of the Sec protein translocase complex. Interacts with the SecYEG preprotein conducting channel. Has a central role in coupling the hydrolysis of ATP to the transfer of proteins into and across the cell membrane, serving both as a receptor for the preprotein-SecB complex and as an ATP-driven molecular motor driving the stepwise translocation of polypeptide chains across the membrane. The chain is Protein translocase subunit SecA from Salmonella agona (strain SL483).